The following is a 488-amino-acid chain: HSPB1-associated protein 1 (488 aa).

Residues 88–208 are interaction with HSPB1; it reads ETTCNYVEAT…EDTPFLYPTR (121 aa). A JmjC domain is found at 124 to 288; that stretch reads WAYADYKYFV…HLARVEEAIT (165 aa). Positions 369–379 are enriched in polar residues; the sequence is QTGSQNLTTGT. Residues 369–415 form a disordered region; that stretch reads QTGSQNLTTGTDKPEAASPFGPDLVPVAQRSEEPPSERGGIFGSDGK.

As to quaternary structure, interacts with CRYAB and HSPB1. In terms of tissue distribution, widely expressed.

The protein localises to the cytoplasm. Functionally, may play a role in cellular stress response. The sequence is that of HSPB1-associated protein 1 (HSPBAP1) from Homo sapiens (Human).